The following is a 258-amino-acid chain: Phosphate import ATP-binding protein PstB (258 aa).

The ABC transporter domain maps to 12-253 (LEVKNLNFYY…PARKETEDYI (242 aa)). 44–51 (GPSGCGKS) is a binding site for ATP.

Belongs to the ABC transporter superfamily. Phosphate importer (TC 3.A.1.7) family. As to quaternary structure, the complex is composed of two ATP-binding proteins (PstB), two transmembrane proteins (PstC and PstA) and a solute-binding protein (PstS).

Its subcellular location is the cell inner membrane. The catalysed reaction is phosphate(out) + ATP + H2O = ADP + 2 phosphate(in) + H(+). In terms of biological role, part of the ABC transporter complex PstSACB involved in phosphate import. Responsible for energy coupling to the transport system. This Bordetella pertussis (strain Tohama I / ATCC BAA-589 / NCTC 13251) protein is Phosphate import ATP-binding protein PstB.